Here is a 451-residue protein sequence, read N- to C-terminus: Ribonuclease J (451 aa).

Residues His84, His86, Asp88, His89, His155, and Asp177 each coordinate Zn(2+). A substrate-binding site is contributed by 384 to 388 (HVSGH). His410 contributes to the Zn(2+) binding site.

The protein belongs to the metallo-beta-lactamase superfamily. RNA-metabolizing metallo-beta-lactamase-like family. Archaeal RNase J subfamily. As to quaternary structure, homodimer. Zn(2+) is required as a cofactor.

The protein localises to the cytoplasm. Inhibited by 1,10-phenanthroline. In terms of biological role, a highly processive 5'-3' exoribonuclease; no evidence has been seen for endonuclease activity. Prefers 5'-phosphate or 5'-hydroxyl ends; 5'-triphosphate substrates are very poorly degraded, does not degrade circular RNA. Does not degrade pre-tRNA(Trp) suggesting it is inhibited by strong secondary structures. Also degrades ssNDA but not dsDNA. This Pyrococcus abyssi (strain GE5 / Orsay) protein is Ribonuclease J.